The primary structure comprises 158 residues: MNYVQYYPTDIVNGEGTRCTLFVSGCTHACRGCYNKKSWSFCAGLPFDEKMEAQILQDLKDTRIKRQGLTLTGGDPLHPRNLAVLLPFVKRVKHECPDKDLWVWTGYTLAELKADTLQRQILPYIDVLIDGKFEQDKADPSLVWRGSANQIIYRFTQY.

Residues C26, C30, and C33 each contribute to the [4Fe-4S] cluster site. S-adenosyl-L-methionine contacts are provided by residues 32-34 (GCY) and G74.

The protein belongs to the organic radical-activating enzymes family. As to quaternary structure, forms a tetramer composed of two NrdD and two NrdG subunits. [4Fe-4S] cluster is required as a cofactor.

It is found in the cytoplasm. It catalyses the reaction glycyl-[protein] + reduced [flavodoxin] + S-adenosyl-L-methionine = glycin-2-yl radical-[protein] + semiquinone [flavodoxin] + 5'-deoxyadenosine + L-methionine + H(+). Activation of anaerobic ribonucleoside-triphosphate reductase under anaerobic conditions by generation of an organic free radical, using S-adenosylmethionine and reduced flavodoxin as cosubstrates to produce 5'-deoxy-adenosine. The protein is Anaerobic ribonucleoside-triphosphate reductase-activating protein (nrdG) of Pasteurella multocida (strain Pm70).